A 717-amino-acid chain; its full sequence is F-box only protein 42 (717 aa).

Residues 1–30 (MASSSDSEDDSFMAVDQEETVLEGTMEQDE) are compositionally biased toward acidic residues. A disordered region spans residues 1–47 (MASSSDSEDDSFMAVDQEETVLEGTMEQDEEPHPVLEAEETRHNRSM). The span at 31-43 (EPHPVLEAEETRH) shows a compositional bias: basic and acidic residues. The region spanning 44 to 93 (NRSMSELPEEVLEYILSFLSPYQEHKTAALVCKQWYRLIKGVAHQCYHGF) is the F-box domain. Kelch repeat units lie at residues 132–184 (SMYV…VYKD), 186–242 (LVLF…VIDD), 244–293 (MIVF…VIDD), and 295–342 (TILI…LWCH). Disordered regions lie at residues 361 to 472 (RAPL…SAAE) and 508 to 539 (PASS…GVHT). Low complexity predominate over residues 363-376 (PLSPSLNSRPSPIS). Residues Ser-365 and Ser-373 each carry the phosphoserine modification. Thr-378 bears the Phosphothreonine mark. Composition is skewed to polar residues over residues 416 to 426 (QRQTPSGSREG) and 455 to 469 (SLDS…STPS). Ser-552 bears the Phosphoserine mark. The span at 570–596 (GPSASAALSPPLGSSPGSPGSQSLSSG) shows a compositional bias: low complexity. Residues 570–635 (GPSASAALSP…PQSLNVGKPL (66 aa)) are disordered.

In terms of assembly, component of some SCF complex, composed of CUL1, SKP1, RBX1 and FBXO42. Interacts (via the kelch domain) with p53/TP53; interaction is direct.

Its function is as follows. Substrate-recognition component of some SCF (SKP1-CUL1-F-box protein)-type E3 ubiquitin ligase complex. Specifically recognizes p53/TP53, promoting its ubiquitination and degradation. This Pongo abelii (Sumatran orangutan) protein is F-box only protein 42 (FBXO42).